The chain runs to 112 residues: Small ribosomal subunit protein bS16 (112 aa).

This sequence belongs to the bacterial ribosomal protein bS16 family.

The sequence is that of Small ribosomal subunit protein bS16 from Karelsulcia muelleri (strain GWSS) (Sulcia muelleri).